We begin with the raw amino-acid sequence, 284 residues long: Proteasome subunit beta 1 (284 aa).

The propeptide at Met-1–Ala-56 is removed in mature form; by autocatalysis. Residue Thr-57 is the Nucleophile of the active site.

Belongs to the peptidase T1B family. In terms of assembly, the 20S proteasome core is composed of 14 alpha and 14 beta subunits that assemble into four stacked heptameric rings, resulting in a barrel-shaped structure. The two inner rings, each composed of seven catalytic beta subunits, are sandwiched by two outer rings, each composed of seven alpha subunits. The catalytic chamber with the active sites is on the inside of the barrel. Has a gated structure, the ends of the cylinder being occluded by the N-termini of the alpha-subunits. Is capped by the proteasome-associated ATPase, ARC.

The protein resides in the cytoplasm. It catalyses the reaction Cleavage of peptide bonds with very broad specificity.. Its pathway is protein degradation; proteasomal Pup-dependent pathway. The formation of the proteasomal ATPase ARC-20S proteasome complex, likely via the docking of the C-termini of ARC into the intersubunit pockets in the alpha-rings, may trigger opening of the gate for substrate entry. Interconversion between the open-gate and close-gate conformations leads to a dynamic regulation of the 20S proteasome proteolysis activity. Component of the proteasome core, a large protease complex with broad specificity involved in protein degradation. The polypeptide is Proteasome subunit beta 1 (Thermomonospora curvata (strain ATCC 19995 / DSM 43183 / JCM 3096 / KCTC 9072 / NBRC 15933 / NCIMB 10081 / Henssen B9)).